The chain runs to 276 residues: Hydroxyethylthiazole kinase (276 aa).

Met48 provides a ligand contact to substrate. Arg124 and Thr175 together coordinate ATP. Substrate is bound at residue Gly202.

It belongs to the Thz kinase family. It depends on Mg(2+) as a cofactor.

It carries out the reaction 5-(2-hydroxyethyl)-4-methylthiazole + ATP = 4-methyl-5-(2-phosphooxyethyl)-thiazole + ADP + H(+). It functions in the pathway cofactor biosynthesis; thiamine diphosphate biosynthesis; 4-methyl-5-(2-phosphoethyl)-thiazole from 5-(2-hydroxyethyl)-4-methylthiazole: step 1/1. Catalyzes the phosphorylation of the hydroxyl group of 4-methyl-5-beta-hydroxyethylthiazole (THZ). This is Hydroxyethylthiazole kinase from Clostridium beijerinckii (strain ATCC 51743 / NCIMB 8052) (Clostridium acetobutylicum).